A 190-amino-acid chain; its full sequence is Xanthine phosphoribosyltransferase (190 aa).

Xanthine-binding residues include Leu20 and Asn27. 128–132 (ANGKA) contacts 5-phospho-alpha-D-ribose 1-diphosphate. A xanthine-binding site is contributed by Lys156.

This sequence belongs to the purine/pyrimidine phosphoribosyltransferase family. Xpt subfamily. In terms of assembly, homodimer.

Its subcellular location is the cytoplasm. It catalyses the reaction XMP + diphosphate = xanthine + 5-phospho-alpha-D-ribose 1-diphosphate. Its pathway is purine metabolism; XMP biosynthesis via salvage pathway; XMP from xanthine: step 1/1. In terms of biological role, converts the preformed base xanthine, a product of nucleic acid breakdown, to xanthosine 5'-monophosphate (XMP), so it can be reused for RNA or DNA synthesis. This is Xanthine phosphoribosyltransferase from Pseudomonas fluorescens (strain ATCC BAA-477 / NRRL B-23932 / Pf-5).